The sequence spans 146 residues: Cytochrome c-556 (146 aa).

Positions 1 to 24 (MCMKLKTITAAMLFGCLCAGAVYA) are cleaved as a signal peptide. Met-35, Cys-135, Cys-138, and His-139 together coordinate heme c.

Monomer. In terms of processing, binds 1 heme c group covalently per subunit.

Low-spin monoheme cytochrome c. This Agrobacterium fabrum (strain C58 / ATCC 33970) (Agrobacterium tumefaciens (strain C58)) protein is Cytochrome c-556.